Here is a 151-residue protein sequence, read N- to C-terminus: Small ribosomal subunit protein uS15 (151 aa).

Residue lysine 27 is modified to N6-acetyllysine; alternate. Position 27 is an N6-succinyllysine; alternate (lysine 27). Residue lysine 27 forms a Glycyl lysine isopeptide (Lys-Gly) (interchain with G-Cter in ubiquitin) linkage. The residue at position 30 (serine 30) is a Phosphoserine. Position 34 is an N6-succinyllysine (lysine 34). The residue at position 38 (tyrosine 38) is a Phosphotyrosine. Lysine 43 is covalently cross-linked (Glycyl lysine isopeptide (Lys-Gly) (interchain with G-Cter in SUMO2)).

Belongs to the universal ribosomal protein uS15 family. In terms of assembly, component of the small ribosomal subunit. Part of the small subunit (SSU) processome, composed of more than 70 proteins and the RNA chaperone small nucleolar RNA (snoRNA) U3. In terms of processing, ubiquitinated at Lys-27 by RNF14 and RNF25 in response to ribosome collisions (ribosome stalling).

Its subcellular location is the cytoplasm. The protein resides in the nucleus. The protein localises to the nucleolus. Component of the small ribosomal subunit. The ribosome is a large ribonucleoprotein complex responsible for the synthesis of proteins in the cell. Part of the small subunit (SSU) processome, first precursor of the small eukaryotic ribosomal subunit. During the assembly of the SSU processome in the nucleolus, many ribosome biogenesis factors, an RNA chaperone and ribosomal proteins associate with the nascent pre-rRNA and work in concert to generate RNA folding, modifications, rearrangements and cleavage as well as targeted degradation of pre-ribosomal RNA by the RNA exosome. The sequence is that of Small ribosomal subunit protein uS15 from Homo sapiens (Human).